The chain runs to 565 residues: Periplasmic trehalase (565 aa).

The N-terminal stretch at 1–30 (MKSPAPSRPQKMALIPACIFLCFAALSVQA) is a signal peptide. Residues R152, 159–160 (WD), N196, 205–207 (RSQ), 277–279 (RPE), and G310 each bind substrate. Residues D312 and E496 each act as proton donor/acceptor in the active site. Substrate is bound at residue E511. The segment at 538–565 (PCDNVPATRPTVKSATTQPSTKEAQPTP) is disordered. A compositionally biased stretch (polar residues) spans 548–565 (TVKSATTQPSTKEAQPTP).

The protein belongs to the glycosyl hydrolase 37 family. Monomer.

It is found in the periplasm. It catalyses the reaction alpha,alpha-trehalose + H2O = alpha-D-glucose + beta-D-glucose. Provides the cells with the ability to utilize trehalose at high osmolarity by splitting it into glucose molecules that can subsequently be taken up by the phosphotransferase-mediated uptake system. This is Periplasmic trehalase from Escherichia coli (strain 55989 / EAEC).